The sequence spans 492 residues: Phytoene desaturase (lycopene-forming) (492 aa).

5 to 38 (TVIGAGFGGLALAIRLQAAGIPVLLLEQRDKPGG) contributes to the FAD binding site.

Belongs to the carotenoid/retinoid oxidoreductase family. FAD is required as a cofactor.

It is found in the cell membrane. The catalysed reaction is 15-cis-phytoene + 4 A = all-trans-lycopene + 4 AH2. It participates in carotenoid biosynthesis; lycopene biosynthesis. Its activity is regulated as follows. Inhibited by NAD and NADP. Converts 15-cis-phytoene into all-trans-lycopene via the intermediary of all-trans-phytofluene, all-trans-zeta-carotene and all-trans-neurosporene, by the introduction of four double bonds. The protein is Phytoene desaturase (lycopene-forming) (crtI) of Pantoea ananas (Erwinia uredovora).